A 1072-amino-acid chain; its full sequence is Vacuolar membrane protease (1072 aa).

At 1–9 the chain is on the cytoplasmic side; the sequence is MINPISFRP. Residues 10 to 30 form a helical membrane-spanning segment; sequence GPVTFWTTLIYLALLIPIVII. Over 31–404 the chain is Vacuolar; the sequence is NEKTPAAPKT…SFVLFGLRGM (374 aa). Residues asparagine 48, asparagine 116, asparagine 119, and asparagine 128 are each glycosylated (N-linked (GlcNAc...) asparagine). Histidine 185 and aspartate 197 together coordinate Zn(2+). Glutamate 231 serves as the catalytic Proton acceptor. Residues glutamate 232, glutamate 257, and histidine 330 each coordinate Zn(2+). A helical transmembrane segment spans residues 405–425; it reads FAWSLTLLIATPLVLVGITWL. Residues 426-457 lie on the Cytoplasmic side of the membrane; the sequence is LRNLDKDYFFTSTVKTKEHPEYEAVPIGGWKG. A helical transmembrane segment spans residues 458–478; that stretch reads FFRFPFALGVAVFFTISSALL. At 479–492 the chain is on the vacuolar side; that stretch reads MNKVNPLIVYSSRY. The helical transmembrane segment at 493-513 threads the bilayer; sequence SVWVMMVSIFYFSFWMIMRGA. Residues 514–523 are Cytoplasmic-facing; it reads NFVRPSALHR. A helical membrane pass occupies residues 524–544; sequence GYANLWLFVFGWIVLVAVTAL. Residues 545–554 are Vacuolar-facing; it reads EDRRRIAAGY. Residues 555–575 traverse the membrane as a helical segment; sequence IFVFLESAIFLSCLISFVELL. At 576 to 747 the chain is on the cytoplasmic side; sequence AVPRKSSYAL…YDHEQEWSGH (172 aa). Positions 593 to 713 are disordered; sequence GQEHDHNGYQ…GTNDRGRTTF (121 aa). A compositionally biased stretch (basic and acidic residues) spans 606-617; it reads DSTDEPSLRARA. The span at 643 to 661 shows a compositional bias: polar residues; it reads GTTNGLSTAPSVAAHSSQP. Residues 748 to 768 form a helical membrane-spanning segment; that stretch reads LPSWAWFFQFLLLGPFMIILA. The Vacuolar segment spans residues 769 to 789; that stretch reads AQTGLMLTDAVYQTGSDGSKL. The helical transmembrane segment at 790-810 threads the bilayer; sequence ITPYLIIFVFTVLLILPLTPF. Topologically, residues 811–817 are cytoplasmic; the sequence is IHRVTHH. Residues 818-838 traverse the membrane as a helical segment; that stretch reads IPVFLLVVFIVTLTYNLIAFP. Over 839 to 1072 the chain is Vacuolar; the sequence is FSANNRYKTF…VEGRKAFKIV (234 aa). Residues asparagine 932 and asparagine 974 are each glycosylated (N-linked (GlcNAc...) asparagine).

The protein belongs to the peptidase M28 family. Requires Zn(2+) as cofactor.

The protein localises to the vacuole membrane. May be involved in vacuolar sorting and osmoregulation. This is Vacuolar membrane protease from Neurospora crassa (strain ATCC 24698 / 74-OR23-1A / CBS 708.71 / DSM 1257 / FGSC 987).